Here is a 612-residue protein sequence, read N- to C-terminus: Phragmoplastin DRP1D (612 aa).

An N-acetylmethionine modification is found at Met-1. The 270-residue stretch at 32–301 (WEALPSVAVV…LESVIRSRIP (270 aa)) folds into the Dynamin-type G domain. A G1 motif region spans residues 42-49 (GGQSSGKS). 45 to 50 (SSGKSS) serves as a coordination point for GTP. The interval 68–70 (VTR) is G2 motif. The segment at 143–146 (DLPG) is G3 motif. Residues 212 to 215 (TKLD) form a G4 motif region. Residues 213 to 218 (KLDLMD) and 243 to 246 (NRSQ) contribute to the GTP site. Positions 242 to 245 (VNRS) are G5 motif. Positions 520 to 612 (FRKIASNVAA…DEIDAAVWVR (93 aa)) constitute a GED domain.

The protein belongs to the TRAFAC class dynamin-like GTPase superfamily. Dynamin/Fzo/YdjA family. As to quaternary structure, forms homodimer and may homooligomerize and heterooligomerize to form the phragmoplastin complex. Binds to PHIP1.

It localises to the cytoplasm. It is found in the cytoskeleton. It catalyses the reaction GTP + H2O = GDP + phosphate + H(+). Putative microtubule-associated force-producing protein. Has a GTPase activity. This chain is Phragmoplastin DRP1D, found in Arabidopsis thaliana (Mouse-ear cress).